A 126-amino-acid polypeptide reads, in one-letter code: Chorion class B protein M1768 (126 aa).

The interval Tyr1–Phe17 is left arm. The segment at Ser18–Glu86 is central domain. Positions Gly87–Tyr126 are right arm (Gly-rich tandem repeats).

The protein belongs to the chorion protein family.

In terms of biological role, this protein is one of many from the eggshell of the silk moth. This Bombyx mori (Silk moth) protein is Chorion class B protein M1768.